The following is a 492-amino-acid chain: uncharacterized protein (492 aa).

It belongs to the FGGY kinase family.

This is an uncharacterized protein from Escherichia coli (strain K12).